An 82-amino-acid polypeptide reads, in one-letter code: RNA-binding protein Hfq (82 aa).

One can recognise a Sm domain in the interval 11-72 (DTFLNAVRKS…ISTIAPSAPV (62 aa)).

This sequence belongs to the Hfq family. Homohexamer.

Its function is as follows. RNA chaperone that binds small regulatory RNA (sRNAs) and mRNAs to facilitate mRNA translational regulation in response to envelope stress, environmental stress and changes in metabolite concentrations. Also binds with high specificity to tRNAs. In Hyphomonas neptunium (strain ATCC 15444), this protein is RNA-binding protein Hfq.